A 202-amino-acid polypeptide reads, in one-letter code: Small ribosomal subunit protein uS4 (202 aa).

A disordered region spans residues 15-43 (LGDLPGLTRKAAKRSNPPGQHGNARRKRS). The 63-residue stretch at 90–152 (GRLDNVCFRL…KGSKKLAEGN (63 aa)) folds into the S4 RNA-binding domain.

Belongs to the universal ribosomal protein uS4 family. As to quaternary structure, part of the 30S ribosomal subunit. Contacts protein S5. The interaction surface between S4 and S5 is involved in control of translational fidelity.

In terms of biological role, one of the primary rRNA binding proteins, it binds directly to 16S rRNA where it nucleates assembly of the body of the 30S subunit. With S5 and S12 plays an important role in translational accuracy. This Prochlorococcus marinus (strain SARG / CCMP1375 / SS120) protein is Small ribosomal subunit protein uS4.